The sequence spans 140 residues: Con-Ins Im2 (140 aa).

The signal sequence occupies residues 1 to 29 (MALTWPSSPPVLLTLLLSLLALQLCAVYG). Disulfide bonds link cysteine 35-cysteine 123, cysteine 50-cysteine 126, cysteine 62-cysteine 139, and cysteine 125-cysteine 130. Positions 64-110 (PRGYVSNWFTKRSAPNKPAETFVDQNLRGVLLNKREALSYLRPREPR) are cleaved as a propeptide — c peptide. Glutamate 134 bears the 4-carboxyglutamate; partial mark.

This sequence belongs to the insulin family. As to quaternary structure, heterodimer of A and B chains; disulfide-linked. In terms of tissue distribution, expressed by the venom gland.

The protein resides in the secreted. This venom insulin facilitates prey capture by rapidly inducing hypoglycemic shock. Intraperitoneal injection of this peptide into zebrafish lowers blood glucose with the same potency than human insulin. In vivo, when applied to water, this peptide reduces overall locomotor activity of zebrafish larvae, observed as a significant decrease in the percentage of time spent swimming and movement frequency. The protein is Con-Ins Im2 of Conus imperialis (Imperial cone).